The chain runs to 436 residues: Trigger factor (436 aa).

In terms of domain architecture, PPIase FKBP-type spans 161 to 246; sequence DDQLNIDFVG…VNSVSEPKLP (86 aa).

This sequence belongs to the FKBP-type PPIase family. Tig subfamily.

Its subcellular location is the cytoplasm. The catalysed reaction is [protein]-peptidylproline (omega=180) = [protein]-peptidylproline (omega=0). Involved in protein export. Acts as a chaperone by maintaining the newly synthesized protein in an open conformation. Functions as a peptidyl-prolyl cis-trans isomerase. The protein is Trigger factor of Pseudomonas fluorescens (strain ATCC BAA-477 / NRRL B-23932 / Pf-5).